The chain runs to 476 residues: Adenosylhomocysteinase (476 aa).

3 residues coordinate substrate: T61, D140, and E200. 201–203 (TTT) is an NAD(+) binding site. Residues K230 and D234 each contribute to the substrate site. Residues N235, 264–269 (GYGDVG), E287, N322, 343–345 (IGH), and N389 each bind NAD(+).

The protein belongs to the adenosylhomocysteinase family. NAD(+) is required as a cofactor.

The protein resides in the cytoplasm. It carries out the reaction S-adenosyl-L-homocysteine + H2O = L-homocysteine + adenosine. It participates in amino-acid biosynthesis; L-homocysteine biosynthesis; L-homocysteine from S-adenosyl-L-homocysteine: step 1/1. Its function is as follows. May play a key role in the regulation of the intracellular concentration of adenosylhomocysteine. The sequence is that of Adenosylhomocysteinase from Acidovorax sp. (strain JS42).